Consider the following 63-residue polypeptide: Large ribosomal subunit protein uL29 (63 aa).

This sequence belongs to the universal ribosomal protein uL29 family.

The protein is Large ribosomal subunit protein uL29 of Aliivibrio fischeri (strain ATCC 700601 / ES114) (Vibrio fischeri).